Consider the following 92-residue polypeptide: Small ribosomal subunit protein uS19c (92 aa).

The protein belongs to the universal ribosomal protein uS19 family.

The protein localises to the plastid. It is found in the chloroplast. Protein S19 forms a complex with S13 that binds strongly to the 16S ribosomal RNA. This Fagopyrum esculentum subsp. ancestrale (Wild buckwheat) protein is Small ribosomal subunit protein uS19c.